We begin with the raw amino-acid sequence, 365 residues long: MKKTALSAWHEGAGAKMIDFGGFLMPVQYSGIIAEHKAVREAAGLFDVSHMGNFYVRGERALEFLQYVTTNDLGKIVDGQAQYTLMLYPDGGIVDDLIIYRVSADTFFLIVNASNCEKDFAWLSDHVGGFEGVTLENRTSELSLIALQGPKAFEVLGRVFPEAGLDKLASFHFATVPFGGAEAMVARTGYTGEAGVEICLPNEEAEALWTALMAAGKNDGIQPIGLGARDTLRLEMGYSLYGHEIDQTVNPLEARLKWVVKMDKPNFIGKQACQQVELDPRKSVVGFSLDGRAIPRQHFKVYNSDKQEIGEVCSGTVSPTLQEPIGTASLLRDYAKTGTPIFVEIRGTFQPGTVRRLPFVHADRP.

It belongs to the GcvT family. The glycine cleavage system is composed of four proteins: P, T, L and H.

It catalyses the reaction N(6)-[(R)-S(8)-aminomethyldihydrolipoyl]-L-lysyl-[protein] + (6S)-5,6,7,8-tetrahydrofolate = N(6)-[(R)-dihydrolipoyl]-L-lysyl-[protein] + (6R)-5,10-methylene-5,6,7,8-tetrahydrofolate + NH4(+). Functionally, the glycine cleavage system catalyzes the degradation of glycine. In Chlorobaculum parvum (strain DSM 263 / NCIMB 8327) (Chlorobium vibrioforme subsp. thiosulfatophilum), this protein is Aminomethyltransferase.